Reading from the N-terminus, the 338-residue chain is UPF0324 membrane protein HI_1643 (338 aa).

The next 10 helical transmembrane spans lie at 5–23 (PFYF…ANYL), 33–55 (HISA…YPQF), 62–84 (GVLF…RLTF), 94–116 (AVVT…GIRY), 123–145 (LVYL…AEPV), 155–177 (VAIA…FYTW), 222–239 (LRVM…WLLT), 254–273 (IPWF…FDLL), 280–302 (LFVE…TTQA), and 312–334 (PLVL…NYGI).

It belongs to the UPF0324 family.

Its subcellular location is the cell membrane. The protein is UPF0324 membrane protein HI_1643 of Haemophilus influenzae (strain ATCC 51907 / DSM 11121 / KW20 / Rd).